The sequence spans 77 residues: MSDIADRVKKIVVEHLGVDEEKVTETASFIDDLGADSLDTVELVMAFEEEFGIEIPDDAAETIQTFGDAVKFIQGAV.

The Carrier domain maps to 2-77; the sequence is SDIADRVKKI…DAVKFIQGAV (76 aa). At serine 37 the chain carries O-(pantetheine 4'-phosphoryl)serine.

Belongs to the acyl carrier protein (ACP) family. In terms of processing, 4'-phosphopantetheine is transferred from CoA to a specific serine of apo-ACP by AcpS. This modification is essential for activity because fatty acids are bound in thioester linkage to the sulfhydryl of the prosthetic group.

It is found in the cytoplasm. Its pathway is lipid metabolism; fatty acid biosynthesis. Carrier of the growing fatty acid chain in fatty acid biosynthesis. In Paracoccus denitrificans (strain Pd 1222), this protein is Acyl carrier protein.